The sequence spans 591 residues: Aspartate--tRNA ligase (591 aa).

Residue Glu-173 coordinates L-aspartate. An aspartate region spans residues 197 to 200 (QLFK). Arg-219 lines the L-aspartate pocket. Residues 219–221 (RDE) and Gln-228 contribute to the ATP site. His-448 contacts L-aspartate. Glu-482 provides a ligand contact to ATP. Arg-489 provides a ligand contact to L-aspartate. 534 to 537 (GLDR) contributes to the ATP binding site.

This sequence belongs to the class-II aminoacyl-tRNA synthetase family. Type 1 subfamily. In terms of assembly, homodimer.

The protein resides in the cytoplasm. The catalysed reaction is tRNA(Asp) + L-aspartate + ATP = L-aspartyl-tRNA(Asp) + AMP + diphosphate. Its function is as follows. Catalyzes the attachment of L-aspartate to tRNA(Asp) in a two-step reaction: L-aspartate is first activated by ATP to form Asp-AMP and then transferred to the acceptor end of tRNA(Asp). This chain is Aspartate--tRNA ligase, found in Shewanella sp. (strain MR-4).